The chain runs to 376 residues: Phytanoyl-CoA hydroxylase-interacting protein-like (376 aa).

A Fibronectin type-III domain is found at 52-161; that stretch reads VPHNIKISNI…EIIEFCTADY (110 aa).

This sequence belongs to the PHYHIP family.

Functionally, may play a role in the development of the central system. This Xenopus tropicalis (Western clawed frog) protein is Phytanoyl-CoA hydroxylase-interacting protein-like (phyhipl).